The chain runs to 213 residues: MKFLIFVLCLSLVNGYGIRRSIQEYDPKESHEHPTMTWELLEKFVGSTLYITTNQILSLPLGAEIYCDEIEGFPCSWPGYKAYAYNHIDYHFDLSSPFYSFVDKFYISLGDREEKIHLRVVGATPKDKRLTVGCRTSFSVNLPIGTQIYHDKDMQHLVEGRHLECAHRVYFVKYCPSHSHGYCFKDKLKVYDLKRVKSRKCFEKINQQQKSEL.

The first 15 residues, 1 to 15 (MKFLIFVLCLSLVNG), serve as a signal peptide directing secretion.

The protein is Non-structural protein 7b of Canine coronavirus (strain K378) (CCoV).